The sequence spans 480 residues: F-box only protein 3 (480 aa).

The 47-residue stretch at 10 to 56 (LLTLESLPTDPLLLILSFVDYRDLINCCYVSRRLSQLSTHDPLWRRH) folds into the F-box domain. An ApaG domain is found at 278–408 (VATTGDITVS…FHMACPTFRV (131 aa)). A compositionally biased stretch (acidic residues) spans 419-458 (EYEEMEEEAEEEEEEENDDSADMDESDESDADENESDEGE). The disordered stretch occupies residues 419–463 (EYEEMEEEAEEEEEEENDDSADMDESDESDADENESDEGEGEARR).

In terms of assembly, part of a SCF (SKP1-cullin-F-box) protein ligase complex SCF(FBXO3) consisting of FBXO3, SKP1, CUL1 and RBX1. Interacts with PML, interaction is direct and takes place either alone or within the SCF complex.

It localises to the nucleus. Its pathway is protein modification; protein ubiquitination. Substrate recognition component of the SCF (SKP1-CUL1-F-box protein)-type E3 ubiquitin ligase complex, SCF(FBXO3), which mediates the ubiquitination and subsequent proteasomal degradation of target proteins. Mediates the ubiquitination of HIPK2 and probably that of EP300, leading to rapid degradation by the proteasome. In the presence of PML, HIPK2 ubiquitination still occurs, but degradation is prevented. PML, HIPK2 and FBXO3 may act synergically to activate p53/TP53-dependent transactivation. The SCF(FBXO3) also acts as a regulator of inflammation by mediating ubiquitination and degradation of FBXL2: specifically recognizes FBXL2 phosphorylated at 'Thr-404' and promotes its ubiquitination. The chain is F-box only protein 3 (Fbxo3) from Mus musculus (Mouse).